The sequence spans 77 residues: MSDCHPVLLPEGPFSREQAVAVTTAYRNVLIEDDQGTHFRLVIRNAGGQLRWRCWNFEPDAGKQLNSYLASEGILRQ.

The protein belongs to the UPF0401 family.

The protein is UPF0401 protein UTI89_C4989 of Escherichia coli (strain UTI89 / UPEC).